A 78-amino-acid polypeptide reads, in one-letter code: ATP synthase subunit a (78 aa).

Helical transmembrane passes span 13–33 (LFGN…LGTS), 35–55 (FLGA…GMFI), and 57–77 (SLQA…KVEA).

The protein belongs to the ATPase A chain family. As to quaternary structure, F-type ATPases have 2 components, CF(1) - the catalytic core - and CF(0) - the membrane proton channel. CF(1) has five subunits: alpha(3), beta(3), gamma(1), delta(1), epsilon(1). CF(0) has three main subunits: a(1), b(2) and c(9-12). The alpha and beta chains form an alternating ring which encloses part of the gamma chain. CF(1) is attached to CF(0) by a central stalk formed by the gamma and epsilon chains, while a peripheral stalk is formed by the delta and b chains.

Its subcellular location is the cell membrane. Key component of the proton channel; it plays a direct role in the translocation of protons across the membrane. This chain is ATP synthase subunit a (atpB), found in Alkalihalobacillus alcalophilus (Bacillus alcalophilus).